A 403-amino-acid chain; its full sequence is Argininosuccinate synthase 1 (403 aa).

Residues 10–18 and A37 contribute to the ATP site; that span reads SYSGGLDTS. L-citrulline is bound by residues Y88 and S93. G118 is an ATP binding site. L-aspartate-binding residues include T120, N124, and D125. Residue N124 coordinates L-citrulline. R128, S179, S188, E264, and Y276 together coordinate L-citrulline.

Belongs to the argininosuccinate synthase family. Type 1 subfamily. As to quaternary structure, homotetramer.

The protein localises to the cytoplasm. The catalysed reaction is L-citrulline + L-aspartate + ATP = 2-(N(omega)-L-arginino)succinate + AMP + diphosphate + H(+). It functions in the pathway amino-acid biosynthesis; L-arginine biosynthesis; L-arginine from L-ornithine and carbamoyl phosphate: step 2/3. The polypeptide is Argininosuccinate synthase 1 (Rhizobium johnstonii (strain DSM 114642 / LMG 32736 / 3841) (Rhizobium leguminosarum bv. viciae)).